A 239-amino-acid polypeptide reads, in one-letter code: Pimeloyl-[acyl-carrier protein] methyl ester esterase (239 aa).

Substrate-binding positions include Trp20, 77-78, and 138-142; these read SM and FISLQ. The active-site Nucleophile is the Ser77. Active-site residues include Asp192 and His220. His220 lines the substrate pocket.

The protein belongs to the AB hydrolase superfamily. Carboxylesterase BioH family. As to quaternary structure, monomer.

Its subcellular location is the cytoplasm. The catalysed reaction is 6-carboxyhexanoyl-[ACP] methyl ester + H2O = 6-carboxyhexanoyl-[ACP] + methanol + H(+). It participates in cofactor biosynthesis; biotin biosynthesis. In terms of biological role, the physiological role of BioH is to remove the methyl group introduced by BioC when the pimeloyl moiety is complete. It allows to synthesize pimeloyl-ACP via the fatty acid synthetic pathway through the hydrolysis of the ester bonds of pimeloyl-ACP esters. The chain is Pimeloyl-[acyl-carrier protein] methyl ester esterase from Legionella pneumophila (strain Lens).